The sequence spans 32 residues: Photosystem II reaction center protein Z (32 aa).

Residues 9 to 29 (IIFSGSLIWVFLLIIVGFLNY) traverse the membrane as a helical segment.

The protein belongs to the PsbZ family. As to quaternary structure, PSII is composed of 1 copy each of membrane proteins PsbA, PsbB, PsbC, PsbD, PsbE, PsbF, PsbH, PsbI, PsbJ, PsbK, PsbL, PsbM, PsbT, PsbY, PsbZ, Psb30/Ycf12, at least 3 peripheral proteins of the oxygen-evolving complex and a large number of cofactors. It forms dimeric complexes.

The protein resides in the plastid. Its subcellular location is the chloroplast thylakoid membrane. May control the interaction of photosystem II (PSII) cores with the light-harvesting antenna, regulates electron flow through the 2 photosystem reaction centers. PSII is a light-driven water plastoquinone oxidoreductase, using light energy to abstract electrons from H(2)O, generating a proton gradient subsequently used for ATP formation. This is Photosystem II reaction center protein Z from Euglena myxocylindracea.